A 600-amino-acid chain; its full sequence is Alpha-N-acetylgalactosaminide alpha-2,6-sialyltransferase 1 (600 aa).

Topologically, residues 1-14 (MRSCLWRCRHLSQG) are cytoplasmic. Residues 15-35 (VQWSLLLAVLVFFLFALPSFI) traverse the membrane as a helical; Signal-anchor for type II membrane protein segment. At 36-600 (KEPQTKPSRH…PGPGTAKAKN (565 aa)) the chain is on the lumenal side. Disordered regions lie at residues 38–191 (PQTK…AATT) and 208–248 (GAVS…TQRN). Residues 46–55 (QRTENIKERS) are compositionally biased toward basic and acidic residues. Polar residues-rich tracts occupy residues 84–94 (NALNTQTQPKA), 151–179 (TEAQSWKSQDTKTTQGNGGQTRKLTASRT), and 209–219 (AVSTRTRQKGV). 2 disulfide bridges follow: Cys-279/Cys-362 and Cys-365/Cys-533. N-linked (GlcNAc...) asparagine glycans are attached at residues Asn-300, Asn-311, Asn-331, Asn-375, and Asn-460.

Belongs to the glycosyltransferase 29 family. Glycosylated; autosialylated. In terms of tissue distribution, expression is restricted to the gastrointestinal tract. Highly expressed in goblet cells. Also expressed in various tumor cells.

Its subcellular location is the golgi apparatus membrane. It catalyses the reaction a beta-D-galactosyl-(1-&gt;3)-N-acetyl-alpha-D-galactosaminyl derivative + CMP-N-acetyl-beta-neuraminate = a beta-D-galactosyl-(1-&gt;3)-[N-acetyl-alpha-neuraminyl-(2-&gt;6)]-N-acetyl-alpha-D-galactosaminyl derivative + CMP + H(+). The enzyme catalyses a 3-O-[N-acetyl-alpha-D-galactosaminyl]-L-seryl-[protein] + CMP-N-acetyl-beta-neuraminate = a 3-O-[N-acetyl-alpha-neuraminosyl-(2-&gt;6)-N-acetyl-alpha-D-galactosaminyl]-L-seryl-[protein] + CMP + H(+). It carries out the reaction a 3-O-[N-acetyl-alpha-D-galactosaminyl]-L-threonyl-[protein] + CMP-N-acetyl-beta-neuraminate = a 3-O-[N-acetyl-alpha-neuraminosyl-(2-&gt;6)-N-acetyl-alpha-D-galactosaminyl]-L-threonyl-[protein] + CMP + H(+). The catalysed reaction is a 3-O-[beta-D-galactosyl-(1-&gt;3)-N-acetyl-alpha-D-galactosaminyl]-L-seryl-[protein] + CMP-N-acetyl-beta-neuraminate = a 3-O-{beta-D-galactosyl-(1-&gt;3)-[N-acetyl-alpha-neuraminosyl-(2-&gt;6)]-N-acetyl-alpha-D-galactosaminyl}-L-seryl-[protein] + CMP + H(+). It catalyses the reaction a 3-O-[beta-D-galactosyl-(1-&gt;3)-N-acetyl-alpha-D-galactosaminyl]-L-threonyl-[protein] + CMP-N-acetyl-beta-neuraminate = a 3-O-{beta-D-galactosyl-(1-&gt;3)-[N-acetyl-alpha-neuraminosyl-(2-&gt;6)]-N-acetyl-alpha-D-galactosaminyl}-L-threonyl-[protein] + CMP + H(+). The enzyme catalyses a 3-O-[N-acetyl-alpha-neuraminyl-(2-&gt;3)-beta-D-galactosyl-(1-&gt;3)-N-acetyl-alpha-D-galactosaminyl]-L-threonyl-[protein] + CMP-N-acetyl-beta-neuraminate = a 3-O-{alpha-Neu5Ac-(2-&gt;3)-beta-D-Gal-(1-&gt;3)-[alpha-Neu5Ac-(2-&gt;6)]-alpha-D-GalNAc}-L-threonyl-[protein] + CMP + H(+). The protein operates within protein modification; protein glycosylation. Its function is as follows. Protein sialyltransferase specifically expressed in goblet cells that plays a key role in intestinal host-commensal homeostasis. Conjugates sialic acid with an alpha-2-6 linkage to N-acetylgalactosamine (GalNAc) glycan chains linked to serine or threonine in glycoproteins. Catalyzes the formation of the sialyl-Tn (S-Tn) antigen, an antigen found in intestinal goblet cells, as well as ulcerative colitis (UC) and various cancers. Protein sialylation in globlet cells is essential for mucus integrity and is required to protect the intestinal mucus against excessive bacterial proteolytic degradation. This Homo sapiens (Human) protein is Alpha-N-acetylgalactosaminide alpha-2,6-sialyltransferase 1.